The sequence spans 585 residues: Stage II sporulation protein E (585 aa).

2 helical membrane-spanning segments follow: residues 40-57 (LGARLGLVVGSLLIGLYA) and 70-86 (SLTAVVLFLLTPSFVLK). Residues 355-565 (DTGVAHAAKG…DDMTVVVAKL (211 aa)) form the PPM-type phosphatase domain.

The protein localises to the cell membrane. The catalysed reaction is O-phospho-L-seryl-[protein] + H2O = L-seryl-[protein] + phosphate. It carries out the reaction O-phospho-L-threonyl-[protein] + H2O = L-threonyl-[protein] + phosphate. In terms of biological role, normally needed for pro-sigma E processing during sporulation but can be bypassed in vegetative cells. Activates SpoIIAA by dephosphorylation. In Priestia megaterium (Bacillus megaterium), this protein is Stage II sporulation protein E (spoIIE).